Here is a 488-residue protein sequence, read N- to C-terminus: Signal recognition particle receptor FtsY (488 aa).

Residues 14–82 (DTAPEDVSKP…AVPDDAVHGG (69 aa)) form a disordered region. Over residues 32–67 (VGTSSTGSPVGTGAAMPAAQDAPSPAAPHAIATPDD) the composition is skewed to low complexity. GTP contacts are provided by residues 287–294 (GVNGVGKT), 369–373 (DTAGR), and 433–436 (TKLD).

This sequence belongs to the GTP-binding SRP family. FtsY subfamily. Part of the signal recognition particle protein translocation system, which is composed of SRP and FtsY. SRP is a ribonucleoprotein composed of Ffh and a 4.5S RNA molecule.

It is found in the cell inner membrane. The protein resides in the cytoplasm. It carries out the reaction GTP + H2O = GDP + phosphate + H(+). Its function is as follows. Involved in targeting and insertion of nascent membrane proteins into the cytoplasmic membrane. Acts as a receptor for the complex formed by the signal recognition particle (SRP) and the ribosome-nascent chain (RNC). Interaction with SRP-RNC leads to the transfer of the RNC complex to the Sec translocase for insertion into the membrane, the hydrolysis of GTP by both Ffh and FtsY, and the dissociation of the SRP-FtsY complex into the individual components. This is Signal recognition particle receptor FtsY from Nitratidesulfovibrio vulgaris (strain ATCC 29579 / DSM 644 / CCUG 34227 / NCIMB 8303 / VKM B-1760 / Hildenborough) (Desulfovibrio vulgaris).